Here is a 645-residue protein sequence, read N- to C-terminus: MKLSMVMVLLVLAGQLSGCGGNDDNNSERTHESGDSNGDVTTPDNDASSNDEDDAALEPTQLRSVEFAQSHVLPPGGLSWDLKESGELQLVEKRDTLVLATFDEAVQAAEVRVYDKNHQLLSSLNLSKPSDLPPTEGDDLPYSDDAWSAVIPSDDMSKGVNIRVVAQGKSASEIVTPALHPELDLTIQSLPFLIYGANESNIPFKIDDLKVMFADPDTAGQGFAGMPFSKTHIVNHPLGVFESDYLIAPPSGSAPAKKVESAADPDYSKPILDMVWHIEYATGDMALNKITFAPSMLIDHSKAGPIKTRGFGGMAYTGSGASMGYPSLGLLWHEGGHALGLPHSLSGSKDLRGPYYPYAEGSLSGSAWGYDQHKGYFRSPLTAPTSRYFVCNGERGGGVFQKTPEGRCYRFDPMHSADEQKDPDAAFPLFSDFNAGKMQRWVRNRARMNPSNDGFQVLDDNGDWADFVPETKHYAGWHIKEHYPVSFDKTTDFIMITYSLAGTDAASHFYNPIRYKGNAIEYVDAINQDGLNSINADISSGARAKYSDYCRRQGCDFTLKVTYEDGSTSYRVLKGSARKDWQPSVWKDDYLNENSKDSYLFWAVALVAPDGAPKVKKLELLDTPILWNLSPTAVMGAEALVVKQL.

The first 13 residues, 1-13, serve as a signal peptide directing secretion; the sequence is MKLSMVMVLLVLA. Residues 19 to 55 are disordered; that stretch reads CGGNDDNNSERTHESGDSNGDVTTPDNDASSNDEDDA. The region spanning 177–448 is the Peptidase M66 domain; the sequence is PALHPELDLT…QRWVRNRARM (272 aa). Residue histidine 333 coordinates Zn(2+). Glutamate 334 is an active-site residue. Zn(2+) contacts are provided by histidine 337 and histidine 343.

This sequence belongs to the dictomallein family. The cofactor is Zn(2+).

It localises to the secreted. This chain is Dictomallein-like protein (dtmL), found in Hahella chejuensis (strain KCTC 2396).